The primary structure comprises 129 residues: UPF0325 protein ESA_03178 (129 aa).

This sequence belongs to the UPF0325 family.

This chain is UPF0325 protein ESA_03178, found in Cronobacter sakazakii (strain ATCC BAA-894) (Enterobacter sakazakii).